Reading from the N-terminus, the 137-residue chain is Small ribosomal subunit protein uS8 (137 aa).

This sequence belongs to the universal ribosomal protein uS8 family. In terms of assembly, part of the 30S ribosomal subunit. Contacts proteins S5 and S12.

One of the primary rRNA binding proteins, it binds directly to 16S rRNA central domain where it helps coordinate assembly of the platform of the 30S subunit. This Metamycoplasma arthritidis (strain 158L3-1) (Mycoplasma arthritidis) protein is Small ribosomal subunit protein uS8.